Here is a 136-residue protein sequence, read N- to C-terminus: MSQLVYFSSSSENTQRFIERLGLPAVRIPLNERERIQVDEPYILIVPSYGGGGTAGAVPRQVIRFLNDEHNRALLRGVIASGNRNFGEAYGRAGDVIAQKCGVPWLYRFELMGTQSDIENVRKGVTEFWQRQPQNA.

This sequence belongs to the NrdI family.

Its function is as follows. Probably involved in ribonucleotide reductase function. The sequence is that of Protein NrdI from Escherichia coli (strain 55989 / EAEC).